The following is a 180-amino-acid chain: Endoribonuclease YbeY (180 aa).

3 residues coordinate Zn(2+): histidine 136, histidine 140, and histidine 146.

Belongs to the endoribonuclease YbeY family. Zn(2+) is required as a cofactor.

The protein localises to the cytoplasm. In terms of biological role, single strand-specific metallo-endoribonuclease involved in late-stage 70S ribosome quality control and in maturation of the 3' terminus of the 16S rRNA. The polypeptide is Endoribonuclease YbeY (Synechococcus sp. (strain CC9902)).